A 350-amino-acid chain; its full sequence is Transcription factor MYB102 (350 aa).

HTH myb-type domains lie at 9–65 and 66–116; these read KNGL…RPDI and KRGR…RKKL. 2 DNA-binding regions (H-T-H motif) span residues 37-61 and 89-112; these read WRTL…TNYL and WSAI…NTHI.

As to expression, expressed in rosette leaves, cauline leaves and flowers.

The protein localises to the nucleus. Functionally, probable transcription factor that may function in osmotic stress and wounding signaling pathways. Contributes to basal resistance against the herbivore Pieris rapae (white cabbage butterfly) feeding. The protein is Transcription factor MYB102 of Arabidopsis thaliana (Mouse-ear cress).